Consider the following 735-residue polypeptide: Disintegrin and metalloproteinase domain-containing protein 2 (735 aa).

The signal sequence occupies residues 1–15 (MLCLLLLLCGLASLG). The propeptide occupies 16–176 (GPLKKYVENS…KIKSIKSSVR (161 aa)). Over 16–680 (GPLKKYVENS…EGAYHTKSRK (665 aa)) the chain is Extracellular. N-linked (GlcNAc...) asparagine glycans are attached at residues N55, N220, and N288. One can recognise a Peptidase M12B domain in the interval 178–375 (HYIEMHIIVE…QVSQCLQNQP (198 aa)). Disulfide bonds link C287-C370, C329-C354, C331-C336, and C442-C455. N353 is a glycosylation site (N-linked (GlcNAc...) asparagine). Positions 384–470 (NPVCGNNRVE…ACQEDLYVIN (87 aa)) constitute a Disintegrin domain. N-linked (GlcNAc...) asparagine glycans are attached at residues N456 and N564. Residues 610 to 643 (LGYDCTPATCSDHGVCNNKRHCHCNPTYVPPNCE) form the EGF-like domain. Cystine bridges form between C614/C625, C619/C631, and C633/C642. Residues 681–701 (WPFFLIIPFFVIFSVLVATVV) traverse the membrane as a helical segment. The Cytoplasmic segment spans residues 702–735 (KVYYQKKKWKTEDYANDENIESESEPKSSKVSSK). A disordered region spans residues 716–735 (ANDENIESESEPKSSKVSSK). The residue at position 723 (S723) is a Phosphoserine.

As to quaternary structure, heterodimer with ADAM1/fertilin subunit alpha. Post-translationally, the signal and the metalloprotease domain are cleaved during the epididymal maturation of the spermatozoa. As to expression, expressed specifically in testis.

Its subcellular location is the membrane. In terms of biological role, sperm surface membrane protein that may be involved in sperm-egg plasma membrane adhesion and fusion during fertilization. Could have a direct role in sperm-zona binding or migration of sperm from the uterus into the oviduct. Interactions with egg membrane could be mediated via binding between its disintegrin-like domain to one or more integrins receptors on the egg. This is a non catalytic metalloprotease-like protein. The sequence is that of Disintegrin and metalloproteinase domain-containing protein 2 (ADAM2) from Cavia porcellus (Guinea pig).